A 232-amino-acid polypeptide reads, in one-letter code: MRKAGVWGLLWMLFIEEIQAAAEVFEEKCTLAEGQTLKVSCPTNTNIYSNSQKAWQRLKDNGEVQTLAITEGSSQVRVGKYFLEDIPSEGMLQIQMANLQVEDSGLYRCVILGPSDPIILFHPVRLVVTKNSLGTPASDEYPCQVSVQNPTPLPVTTKLRPRPRPRPKPVTQPIPTSADRLSSPGFTVTPTNVTHVNRAPGISIIIPAACGLLSKTLVFIGLFAVTHRSFAS.

A signal peptide spans 1–20; it reads MRKAGVWGLLWMLFIEEIQA. The region spanning 21 to 125 is the Ig-like V-type domain; that stretch reads AAEVFEEKCT…DPIILFHPVR (105 aa). At 21–203 the chain is on the extracellular side; the sequence is AAEVFEEKCT…THVNRAPGIS (183 aa). A disulfide bond links Cys41 and Cys109. Residues 152-186 are disordered; that stretch reads PLPVTTKLRPRPRPRPKPVTQPIPTSADRLSSPGF. Residue Asn192 is glycosylated (N-linked (GlcNAc...) asparagine). The helical transmembrane segment at 204–224 threads the bilayer; the sequence is IIIPAACGLLSKTLVFIGLFA. At 225–232 the chain is on the cytoplasmic side; it reads VTHRSFAS.

Monomer. Homomultimer; when activated. Interacts with TYROBP/DAP12. Interacts with TLR4. As to expression, detected in bone marrow, tongue, lung, liver, thymus, spleen, jejunum, ileum and lymph nodes.

The protein localises to the cell membrane. Cell surface receptor that plays important roles in innate and adaptive immunity by amplifying inflammatory responses. Upon activation by various ligands such as PGLYRP1, HMGB1 or HSP70, multimerizes and forms a complex with transmembrane adapter TYROBP/DAP12. In turn, initiates a SYK-mediated cascade of tyrosine phosphorylation, activating multiple downstream mediators such as BTK, MAPK1, MAPK3 or phospholipase C-gamma. This cascade promotes the neutrophil- and macrophage-mediated release of pro-inflammatory cytokines and/or chemokines, as well as their migration and thereby amplifies inflammatory responses that are triggered by bacterial and fungal infections. By also promoting the amplification of inflammatory signals that are initially triggered by Toll-like receptor (TLR) and NOD-like receptor engagement, plays a major role in the pathophysiology of acute and chronic inflammatory diseases of different etiologies including septic shock and atherosclerosis. In Bos taurus (Bovine), this protein is Triggering receptor expressed on myeloid cells 1 (TREM1).